The following is an 860-amino-acid chain: Leucine--tRNA ligase (860 aa).

The 'HIGH' region signature appears at 42-52 (PYPSGRLHMGH). Positions 619–623 (KMSKS) match the 'KMSKS' region motif. Lysine 622 contacts ATP.

It belongs to the class-I aminoacyl-tRNA synthetase family.

It is found in the cytoplasm. It carries out the reaction tRNA(Leu) + L-leucine + ATP = L-leucyl-tRNA(Leu) + AMP + diphosphate. The polypeptide is Leucine--tRNA ligase (Edwardsiella ictaluri (strain 93-146)).